Reading from the N-terminus, the 449-residue chain is UDP-N-acetylmuramoyl-tripeptide--D-alanyl-D-alanine ligase (449 aa).

106-112 (GSVGKTS) provides a ligand contact to ATP.

It belongs to the MurCDEF family. MurF subfamily.

The protein resides in the cytoplasm. It catalyses the reaction D-alanyl-D-alanine + UDP-N-acetyl-alpha-D-muramoyl-L-alanyl-gamma-D-glutamyl-meso-2,6-diaminopimelate + ATP = UDP-N-acetyl-alpha-D-muramoyl-L-alanyl-gamma-D-glutamyl-meso-2,6-diaminopimeloyl-D-alanyl-D-alanine + ADP + phosphate + H(+). Its pathway is cell wall biogenesis; peptidoglycan biosynthesis. Its function is as follows. Involved in cell wall formation. Catalyzes the final step in the synthesis of UDP-N-acetylmuramoyl-pentapeptide, the precursor of murein. The chain is UDP-N-acetylmuramoyl-tripeptide--D-alanyl-D-alanine ligase from Rickettsia prowazekii (strain Madrid E).